The following is a 328-amino-acid chain: Probable cell division protein WhiA (328 aa).

The segment at residues 273–306 (SLEELGALADPPLTKDAVAGRIRRLLAMADKRAS) is a DNA-binding region (H-T-H motif).

It belongs to the WhiA family. As to quaternary structure, monomer in solution.

Involved in cell division and chromosome segregation. Involved in sporulation. May coordinate the cessation of aerial hyphae growth and subsequent chromosome segregation and/or septation. Required for expression of the ParB partioning protein during sporogenesis. Activates its own transcription and represses WhiB. Binds with low affinity to its own promoter and to the Parp2 sporulation-specific promoter. Also binds directly to the RNA polymerase sigma factor WhiG, leading to inhibition of WhiG-dependent transcription in a dose-dependent manner. This is Probable cell division protein WhiA from Streptomyces coelicolor (strain ATCC BAA-471 / A3(2) / M145).